The following is a 252-amino-acid chain: Major prion protein (252 aa).

A signal peptide spans 1 to 28 (MAHLGYWMLLLFVATWSDVGLCKKRPKP). The tract at residues 23–229 (KKRPKPGGGW…ESQAAYQRAA (207 aa)) is interaction with GRB2, ERI3 and SYN1. The interval 26–109 (PKPGGGWNTG…KPSKPKTSMK (84 aa)) is disordered. Repeat copies occupy residues 51–59 (PPQGGGWGQ), 60–67 (PHGGGWGQ), 68–75 (PHGGGWGQ), 76–83 (PHGGGWGQ), and 84–92 (PHGGGWGQG). The 5 X 8 AA tandem repeats of P-H-G-G-G-W-G-Q stretch occupies residues 51–92 (PPQGGGWGQPHGGGWGQPHGGGWGQPHGGGWGQPHGGGWGQG). A compositionally biased stretch (gly residues) spans 53–93 (QGGGWGQPHGGGWGQPHGGGWGQPHGGGWGQPHGGGWGQGG). Cu(2+) is bound by residues His61, Gly62, Gly63, His69, Gly70, Gly71, His77, Gly78, Gly79, His85, Gly86, and Gly87. A disulfide bridge connects residues Cys178 and Cys213. N-linked (GlcNAc...) asparagine glycosylation is found at Asn180 and Asn196. Ala229 carries GPI-anchor amidated alanine lipidation. The propeptide at 230–252 (GVLLFSSPPVILLISFLIFLIVG) is removed in mature form.

The protein belongs to the prion family. As to quaternary structure, monomer and homodimer. Has a tendency to aggregate into amyloid fibrils containing a cross-beta spine, formed by a steric zipper of superposed beta-strands. Soluble oligomers may represent an intermediate stage on the path to fibril formation. Copper binding may promote oligomerization. Interacts with GRB2, APP, ERI3/PRNPIP and SYN1. Mislocalized cytosolically exposed PrP interacts with MGRN1; this interaction alters MGRN1 subcellular location and causes lysosomal enlargement. Interacts with KIAA1191.

It is found in the cell membrane. The protein resides in the golgi apparatus. In terms of biological role, its primary physiological function is unclear. Has cytoprotective activity against internal or environmental stresses. May play a role in neuronal development and synaptic plasticity. May be required for neuronal myelin sheath maintenance. May play a role in iron uptake and iron homeostasis. Soluble oligomers are toxic to cultured neuroblastoma cells and induce apoptosis (in vitro). Association with GPC1 (via its heparan sulfate chains) targets PRNP to lipid rafts. Also provides Cu(2+) or Zn(2+) for the ascorbate-mediated GPC1 deaminase degradation of its heparan sulfate side chains. The protein is Major prion protein (PRNP) of Oryctolagus cuniculus (Rabbit).